A 280-amino-acid polypeptide reads, in one-letter code: Mediator of RNA polymerase II transcription subunit 2 (280 aa).

The tract at residues 212–247 (GLQNTSGGNEKKNDPQINFNDTNAPPSAVNVPENGN) is disordered. Positions 226 to 236 (PQINFNDTNAP) are enriched in polar residues.

This sequence belongs to the Mediator complex subunit 2 family. In terms of assembly, component of the Mediator complex.

The protein localises to the nucleus. Its function is as follows. Component of the Mediator complex, a coactivator involved in the regulated transcription of nearly all RNA polymerase II-dependent genes. Mediator functions as a bridge to convey information from gene-specific regulatory proteins to the basal RNA polymerase II transcription machinery. Mediator is recruited to promoters by direct interactions with regulatory proteins and serves as a scaffold for the assembly of a functional preinitiation complex with RNA polymerase II and the general transcription factors. The protein is Mediator of RNA polymerase II transcription subunit 2 (MED2) of Kluyveromyces lactis (strain ATCC 8585 / CBS 2359 / DSM 70799 / NBRC 1267 / NRRL Y-1140 / WM37) (Yeast).